The chain runs to 152 residues: Transcriptional repressor NrdR (152 aa).

The segment at 3–34 is a zinc-finger region; that stretch reads CPYCNASDTKVIDSRLAAEGAQVRRRRSCNSC. The 91-residue stretch at 49-139 folds into the ATP-cone domain; it reads PRIIKSSGKI…VYRDFQDIDA (91 aa).

It belongs to the NrdR family. The cofactor is Zn(2+).

Negatively regulates transcription of bacterial ribonucleotide reductase nrd genes and operons by binding to NrdR-boxes. The chain is Transcriptional repressor NrdR from Psychrobacter arcticus (strain DSM 17307 / VKM B-2377 / 273-4).